We begin with the raw amino-acid sequence, 64 residues long: Probable tautomerase lp_1712 (64 aa).

The active-site Proton acceptor; via imino nitrogen is the Pro2.

Belongs to the 4-oxalocrotonate tautomerase family.

This is Probable tautomerase lp_1712 from Lactiplantibacillus plantarum (strain ATCC BAA-793 / NCIMB 8826 / WCFS1) (Lactobacillus plantarum).